Consider the following 198-residue polypeptide: MAGSPRVGVLALQGDVREHLTVLWALGADAVRVRRPDELETVAGLVIPGGESSVMDKLARTVGLAGPLRNAIAGGLPVYGTCAGLIMLADTIVDGIAGQRSLGGLDVAVRRNAFGSQAESFETDLSFPTLGAEPMHAVFIRAPIVESVGPRATVLARVPDGRVVAVEQDNLLGTAFHPELSGDKRFHEYFLVKVHGRV.

Glycine 50–serine 52 contacts L-glutamine. Residue cysteine 82 is the Nucleophile of the active site. Residues arginine 111 and isoleucine 140 to arginine 141 each bind L-glutamine. Catalysis depends on charge relay system residues histidine 177 and glutamate 179.

This sequence belongs to the glutaminase PdxT/SNO family. In the presence of PdxS, forms a dodecamer of heterodimers. Only shows activity in the heterodimer.

The catalysed reaction is aldehydo-D-ribose 5-phosphate + D-glyceraldehyde 3-phosphate + L-glutamine = pyridoxal 5'-phosphate + L-glutamate + phosphate + 3 H2O + H(+). It carries out the reaction L-glutamine + H2O = L-glutamate + NH4(+). It participates in cofactor biosynthesis; pyridoxal 5'-phosphate biosynthesis. Its function is as follows. Catalyzes the hydrolysis of glutamine to glutamate and ammonia as part of the biosynthesis of pyridoxal 5'-phosphate. The resulting ammonia molecule is channeled to the active site of PdxS. The chain is Pyridoxal 5'-phosphate synthase subunit PdxT from Leifsonia xyli subsp. xyli (strain CTCB07).